The primary structure comprises 499 residues: Apolipoprotein N-acyltransferase (499 aa).

6 helical membrane passes run 18-38 (FSPYNFWPASIISIFGLLIIT), 50-70 (LGFLWGIGNFFNEIYWIYISI), 82-102 (IIIILLLSSYLSLYPTIFVIL), 105-125 (FFFPKINFFLFCVGAPSAWMI), 156-176 (PIIGVSGISYILIIISGMCVL), and 182-202 (SYYPIIFIIFIITLTYPLNFF). Residues 217-461 (IQGNISQHTY…NDFLLEEVFS (245 aa)) enclose the CN hydrolase domain. Glu-257 functions as the Proton acceptor in the catalytic mechanism. Lys-320 is a catalytic residue. Residue Cys-372 is the Nucleophile of the active site. The chain crosses the membrane as a helical span at residues 476 to 496 (LLFFSIICFIISFFIKIKLIF).

This sequence belongs to the CN hydrolase family. Apolipoprotein N-acyltransferase subfamily.

The protein resides in the cell membrane. It carries out the reaction N-terminal S-1,2-diacyl-sn-glyceryl-L-cysteinyl-[lipoprotein] + a glycerophospholipid = N-acyl-S-1,2-diacyl-sn-glyceryl-L-cysteinyl-[lipoprotein] + a 2-acyl-sn-glycero-3-phospholipid + H(+). It participates in protein modification; lipoprotein biosynthesis (N-acyl transfer). Functionally, catalyzes the phospholipid dependent N-acylation of the N-terminal cysteine of apolipoprotein, the last step in lipoprotein maturation. This is Apolipoprotein N-acyltransferase from Wigglesworthia glossinidia brevipalpis.